We begin with the raw amino-acid sequence, 266 residues long: Glutathione S-transferase AN1595 (266 aa).

Positions 43–123 (SFGKLYTYKR…HVTNEDSTTT (81 aa)) constitute a GST N-terminal domain. Residues Lys93, Glu107, Cys108, and Asn143 each contribute to the glutathione site. Lys93 serves as a coordination point for substrate. The GST C-terminal domain occupies 128–259 (SSLDFVQIIR…VEEGLPNAPP (132 aa)).

It belongs to the GST superfamily.

The protein operates within secondary metabolite biosynthesis; terpenoid biosynthesis. Its function is as follows. Glutathione S-transferase; part of the gene cluster that mediates the biosynthesis of the diterpene ent-pimara-8(14),15-diene (PD). Within the cluster, the HMG-CoA reductase AN1593 functions in the mevalonate pathway, which produces isoprenoid precursors. The geranylgeranyl pyrophosphate (GGPP) synthase AN1592 is needed in the formation of GGPP, the precursor for diterpenes. Lastly, the pimaradiene synthase pbcA performs the 2 cyclization steps that convert GGPP to ent-pimara-8(14),15-diene. The putative roles of the remaining cluster enzymes in ent-pimara-8(14),15-diene biosynthesis is unclear. The cytochrome P450 monooxygenase AN1598, the glutathione S-transferase AN1595, the oxidoreductases AN1596 and AN1597 probably function as decorative enzymes. It is possible that in biological conditions the compound is oxidized to ent-pimara-8(14),15-dien-19-oic acid, which is a bioactive diterpene compound predominant in many plant extracts. The chain is Glutathione S-transferase AN1595 from Emericella nidulans (strain FGSC A4 / ATCC 38163 / CBS 112.46 / NRRL 194 / M139) (Aspergillus nidulans).